The following is a 300-amino-acid chain: Tyrosine recombinase XerD (300 aa).

The Core-binding (CB) domain occupies 6–89 (LFHKRLIEQF…ALKVFFHFLK (84 aa)). A Tyr recombinase domain is found at 108–293 (RLPSILSTEE…ASESLIEKFH (186 aa)). Residues Arg152, Lys174, His245, Arg248, and His271 contribute to the active site. Catalysis depends on Tyr280, which acts as the O-(3'-phospho-DNA)-tyrosine intermediate.

This sequence belongs to the 'phage' integrase family. XerD subfamily. Forms a cyclic heterotetrameric complex composed of two molecules of XerC and two molecules of XerD.

It localises to the cytoplasm. In terms of biological role, site-specific tyrosine recombinase, which acts by catalyzing the cutting and rejoining of the recombining DNA molecules. The XerC-XerD complex is essential to convert dimers of the bacterial chromosome into monomers to permit their segregation at cell division. It also contributes to the segregational stability of plasmids. The chain is Tyrosine recombinase XerD from Chlamydia trachomatis serovar D (strain ATCC VR-885 / DSM 19411 / UW-3/Cx).